Consider the following 451-residue polypeptide: Coproporphyrinogen III oxidase (451 aa).

FAD contacts are provided by residues G10 to G15, D36 to P37, G58 to A61, V242, W393, and I429 to V431.

It belongs to the protoporphyrinogen/coproporphyrinogen oxidase family. Coproporphyrinogen III oxidase subfamily. The cofactor is FAD.

It localises to the cytoplasm. It catalyses the reaction coproporphyrinogen III + 3 O2 = coproporphyrin III + 3 H2O2. Its pathway is porphyrin-containing compound metabolism; protoheme biosynthesis. In terms of biological role, involved in coproporphyrin-dependent heme b biosynthesis. Catalyzes the oxidation of coproporphyrinogen III to coproporphyrin III. The polypeptide is Coproporphyrinogen III oxidase (Mycobacterium leprae (strain TN)).